The following is a 372-amino-acid chain: DNA primase small subunit PriS (372 aa).

Catalysis depends on residues D95, D97, and D280.

Belongs to the eukaryotic-type primase small subunit family. Heterodimer of a small subunit (PriS) and a large subunit (PriL). Mg(2+) serves as cofactor. Requires Mn(2+) as cofactor.

Functionally, catalytic subunit of DNA primase, an RNA polymerase that catalyzes the synthesis of short RNA molecules used as primers for DNA polymerase during DNA replication. The small subunit contains the primase catalytic core and has DNA synthesis activity on its own. Binding to the large subunit stabilizes and modulates the activity, increasing the rate of DNA synthesis while decreasing the length of the DNA fragments, and conferring RNA synthesis capability. The DNA polymerase activity may enable DNA primase to also catalyze primer extension after primer synthesis. May also play a role in DNA repair. The protein is DNA primase small subunit PriS of Cenarchaeum symbiosum (strain A).